A 64-amino-acid polypeptide reads, in one-letter code: Large ribosomal subunit protein bL35 (64 aa).

This sequence belongs to the bacterial ribosomal protein bL35 family.

The chain is Large ribosomal subunit protein bL35 from Ectopseudomonas mendocina (strain ymp) (Pseudomonas mendocina).